A 430-amino-acid polypeptide reads, in one-letter code: Glutamate-1-semialdehyde 2,1-aminomutase (430 aa).

Lys267 is subject to N6-(pyridoxal phosphate)lysine.

The protein belongs to the class-III pyridoxal-phosphate-dependent aminotransferase family. HemL subfamily. As to quaternary structure, homodimer. It depends on pyridoxal 5'-phosphate as a cofactor.

Its subcellular location is the cytoplasm. The enzyme catalyses (S)-4-amino-5-oxopentanoate = 5-aminolevulinate. Its pathway is porphyrin-containing compound metabolism; protoporphyrin-IX biosynthesis; 5-aminolevulinate from L-glutamyl-tRNA(Glu): step 2/2. The chain is Glutamate-1-semialdehyde 2,1-aminomutase from Thermomicrobium roseum (strain ATCC 27502 / DSM 5159 / P-2).